The primary structure comprises 133 residues: MAIQQPEQYYGTGRRKAAVARVFLRPGEGKIVVNGKEFQTYFRGLLRAVNALQGFRETGTAGRFDAVITVTGGGPSGQADAIKLGIARALLKVNPDFRAQMKPKGLLTRDPREVERKKYGLKKARRAPQFSKR.

The disordered stretch occupies residues 101-133 (MKPKGLLTRDPREVERKKYGLKKARRAPQFSKR). Basic and acidic residues predominate over residues 107 to 118 (LTRDPREVERKK). The segment covering 119–133 (YGLKKARRAPQFSKR) has biased composition (basic residues).

Belongs to the universal ribosomal protein uS9 family.

The chain is Small ribosomal subunit protein uS9 from Deinococcus radiodurans (strain ATCC 13939 / DSM 20539 / JCM 16871 / CCUG 27074 / LMG 4051 / NBRC 15346 / NCIMB 9279 / VKM B-1422 / R1).